Here is a 476-residue protein sequence, read N- to C-terminus: ATP synthase subunit beta (476 aa).

158–165 contacts ATP; that stretch reads GGAGVGKT.

The protein belongs to the ATPase alpha/beta chains family. In terms of assembly, F-type ATPases have 2 components, CF(1) - the catalytic core - and CF(0) - the membrane proton channel. CF(1) has five subunits: alpha(3), beta(3), gamma(1), delta(1), epsilon(1). CF(0) has three main subunits: a(1), b(2) and c(9-12). The alpha and beta chains form an alternating ring which encloses part of the gamma chain. CF(1) is attached to CF(0) by a central stalk formed by the gamma and epsilon chains, while a peripheral stalk is formed by the delta and b chains.

The protein resides in the cell inner membrane. The enzyme catalyses ATP + H2O + 4 H(+)(in) = ADP + phosphate + 5 H(+)(out). Produces ATP from ADP in the presence of a proton gradient across the membrane. The catalytic sites are hosted primarily by the beta subunits. The protein is ATP synthase subunit beta of Paracidovorax citrulli (strain AAC00-1) (Acidovorax citrulli).